A 218-amino-acid polypeptide reads, in one-letter code: Pyridoxine/pyridoxamine 5'-phosphate oxidase (218 aa).

Residues 12–15 and arginine 70 contribute to the substrate site; that span reads RLAY. Residues 65 to 70, 80 to 81, lysine 87, and glutamine 109 contribute to the FMN site; these read RTVLLR and YT. Residues tyrosine 127, arginine 131, and serine 135 each coordinate substrate. FMN-binding positions include 145-146 and tryptophan 191; that span reads QS. 197–199 provides a ligand contact to substrate; it reads RLH. An FMN-binding site is contributed by arginine 201.

The protein belongs to the pyridoxamine 5'-phosphate oxidase family. In terms of assembly, homodimer. Requires FMN as cofactor.

The catalysed reaction is pyridoxamine 5'-phosphate + O2 + H2O = pyridoxal 5'-phosphate + H2O2 + NH4(+). The enzyme catalyses pyridoxine 5'-phosphate + O2 = pyridoxal 5'-phosphate + H2O2. It participates in cofactor metabolism; pyridoxal 5'-phosphate salvage; pyridoxal 5'-phosphate from pyridoxamine 5'-phosphate: step 1/1. It functions in the pathway cofactor metabolism; pyridoxal 5'-phosphate salvage; pyridoxal 5'-phosphate from pyridoxine 5'-phosphate: step 1/1. In terms of biological role, catalyzes the oxidation of either pyridoxine 5'-phosphate (PNP) or pyridoxamine 5'-phosphate (PMP) into pyridoxal 5'-phosphate (PLP). In Deinococcus geothermalis (strain DSM 11300 / CIP 105573 / AG-3a), this protein is Pyridoxine/pyridoxamine 5'-phosphate oxidase.